The chain runs to 189 residues: uncharacterized protein (189 aa).

The first 19 residues, 1-19, serve as a signal peptide directing secretion; it reads MNKLTILFLILALISVIYA. Residues 24 to 189 form a disordered region; the sequence is PSSSEDSSSN…GSGSSGTVYY (166 aa). Residues 25 to 69 are compositionally biased toward low complexity; that stretch reads SSSEDSSSNDSNSQVTGSQSYSGSQSDSNSGSESHTINTGSSYSG. Residues 70–101 are compositionally biased toward gly residues; it reads SGSGSSGISGGSGSGSGSGSGSGSGSGSGSGA. The span at 102–142 shows a compositional bias: low complexity; sequence VSGSQSGSGAVSGSQSGSGAVSGSQSGVQTGSQSGAGSASG. Polar residues predominate over residues 144-157; that stretch reads FTGNPSGSQSQEIN. The span at 165 to 183 shows a compositional bias: gly residues; it reads SGSGAPTGAATGSGSGSGS.

This is an uncharacterized protein from Dictyostelium discoideum (Social amoeba).